Here is a 592-residue protein sequence, read N- to C-terminus: A-type ATP synthase subunit A (592 aa).

ATP is bound at residue 233–240 (GPFGSGKT).

The protein belongs to the ATPase alpha/beta chains family. As to quaternary structure, has multiple subunits with at least A(3), B(3), C, D, E, F, H, I and proteolipid K(x).

The protein localises to the cell membrane. It catalyses the reaction ATP + H2O + 4 H(+)(in) = ADP + phosphate + 5 H(+)(out). Functionally, component of the A-type ATP synthase that produces ATP from ADP in the presence of a proton gradient across the membrane. The A chain is the catalytic subunit. The sequence is that of A-type ATP synthase subunit A from Saccharolobus islandicus (strain M.16.27) (Sulfolobus islandicus).